Reading from the N-terminus, the 432-residue chain is Serine--tRNA ligase (432 aa).

238 to 240 (TAE) contributes to the L-serine binding site. 269-271 (RSE) is an ATP binding site. Glu-292 contacts L-serine. 356–359 (EVSS) is an ATP binding site. Residue Ser-392 coordinates L-serine.

Belongs to the class-II aminoacyl-tRNA synthetase family. Type-1 seryl-tRNA synthetase subfamily. As to quaternary structure, homodimer. The tRNA molecule binds across the dimer.

The protein resides in the cytoplasm. It carries out the reaction tRNA(Ser) + L-serine + ATP = L-seryl-tRNA(Ser) + AMP + diphosphate + H(+). The enzyme catalyses tRNA(Sec) + L-serine + ATP = L-seryl-tRNA(Sec) + AMP + diphosphate + H(+). The protein operates within aminoacyl-tRNA biosynthesis; selenocysteinyl-tRNA(Sec) biosynthesis; L-seryl-tRNA(Sec) from L-serine and tRNA(Sec): step 1/1. In terms of biological role, catalyzes the attachment of serine to tRNA(Ser). Is also able to aminoacylate tRNA(Sec) with serine, to form the misacylated tRNA L-seryl-tRNA(Sec), which will be further converted into selenocysteinyl-tRNA(Sec). This chain is Serine--tRNA ligase, found in Buchnera aphidicola subsp. Baizongia pistaciae (strain Bp).